The primary structure comprises 543 residues: Chaperonin GroEL (543 aa).

ATP is bound by residues 30-33, Lys51, 87-91, Gly415, 480-482, and Asp496; these read TLGP, DGTTT, and DAA.

This sequence belongs to the chaperonin (HSP60) family. Forms a cylinder of 14 subunits composed of two heptameric rings stacked back-to-back. Interacts with the co-chaperonin GroES.

The protein localises to the cytoplasm. The enzyme catalyses ATP + H2O + a folded polypeptide = ADP + phosphate + an unfolded polypeptide.. Together with its co-chaperonin GroES, plays an essential role in assisting protein folding. The GroEL-GroES system forms a nano-cage that allows encapsulation of the non-native substrate proteins and provides a physical environment optimized to promote and accelerate protein folding. This is Chaperonin GroEL from Hydrogenobaculum sp. (strain Y04AAS1).